Here is a 260-residue protein sequence, read N- to C-terminus: Small ribosomal subunit protein cS22 (260 aa).

The transit peptide at 1 to 62 (MATISSILPC…TNPPLLKVRA (62 aa)) directs the protein to the chloroplast. The segment covering 63–78 (VVTEETSSSSTASSSS) has biased composition (low complexity). The segment at 63–83 (VVTEETSSSSTASSSSDGEGA) is disordered. RRM domains lie at 84–162 (RRLY…ITEK) and 184–260 (YKVY…VNKA).

In terms of assembly, component of the chloroplast small ribosomal subunit (SSU). Mature 70S chloroplast ribosomes of higher plants consist of a small (30S) and a large (50S) subunit. The 30S small subunit contains 1 molecule of ribosomal RNA (16S rRNA) and 24 different proteins. The 50S large subunit contains 3 rRNA molecules (23S, 5S and 4.5S rRNA) and 33 different proteins.

The protein resides in the plastid. It is found in the chloroplast. In terms of biological role, component of the chloroplast ribosome (chloro-ribosome), a dedicated translation machinery responsible for the synthesis of chloroplast genome-encoded proteins, including proteins of the transcription and translation machinery and components of the photosynthetic apparatus. cS22 may have a role in the recruitment of stored chloroplast mRNAs for active protein synthesis. This chain is Small ribosomal subunit protein cS22 (PSRP2), found in Spinacia oleracea (Spinach).